Consider the following 654-residue polypeptide: Meiotically up-regulated gene 24 protein (654 aa).

Positions 299–355 constitute an RRM 1 domain; that stretch reads RNVFIGNLPSSYHEKEIEEAFGKFGKIEHIKILSKKNIAFVHFLNIRDAIKVVRTLS. The segment at 383–404 is disordered; it reads SCFTSKQNPDTTSDRCRQQESK. The span at 384 to 393 shows a compositional bias: polar residues; the sequence is CFTSKQNPDT. Basic and acidic residues predominate over residues 394-404; that stretch reads TSDRCRQQESK. 2 RRM domains span residues 409 to 482 and 500 to 571; these read RTVF…WGKE and RNVY…YAPD.

The protein localises to the cytoplasm. In terms of biological role, has a role in meiosis. The chain is Meiotically up-regulated gene 24 protein (mug24) from Schizosaccharomyces pombe (strain 972 / ATCC 24843) (Fission yeast).